The sequence spans 446 residues: CBL-interacting serine/threonine-protein kinase 24 (446 aa).

The Protein kinase domain maps to Tyr-11–Phe-264. Residues Ile-17–Val-25 and Lys-40 contribute to the ATP site. Asp-134 (proton acceptor) is an active-site residue. The tract at residues Asp-152–Glu-179 is activation loop. Ser-156 is subject to Phosphoserine. Thr-168 is modified (phosphothreonine). Positions Glu-305–Asp-329 constitute an NAF domain. Residues Lys-336 to Ser-365 are PPI.

This sequence belongs to the protein kinase superfamily. CAMK Ser/Thr protein kinase family. SNF1 subfamily. In terms of assembly, interacts with CBL1, CBL2, CBL4/SOS3, CBL5, CBL9, CBL10 and with the protein phosphatase 2C ABI2. It depends on Mn(2+) as a cofactor. Autophosphorylated.

It is found in the cytoplasm. The protein resides in the nucleus. The enzyme catalyses L-seryl-[protein] + ATP = O-phospho-L-seryl-[protein] + ADP + H(+). It catalyses the reaction L-threonyl-[protein] + ATP = O-phospho-L-threonyl-[protein] + ADP + H(+). Functionally, involved in the regulatory pathway for the control of intracellular Na(+) and K(+) homeostasis and salt tolerance. Activates the vacuolar H(+)/Ca(2+) antiporter CAX1 and operates in synergy with CBL4/SOS3 to activate the plasma membrane Na(+)/H(+) antiporter SOS1. CIPK serine-threonine protein kinases interact with CBL proteins. Binding of a CBL protein to the regulatory NAF domain of CIPK protein lead to the activation of the kinase in a calcium-dependent manner. Phosphorylates CBL1, CBL4 and CBL10. This Arabidopsis thaliana (Mouse-ear cress) protein is CBL-interacting serine/threonine-protein kinase 24 (CIPK24).